We begin with the raw amino-acid sequence, 4646 residues long: Cytoplasmic dynein 1 heavy chain 1 (4646 aa).

Position 2 is an N-acetylserine (serine 2). Residues 53–1867 (EAALEEKSAL…SIQMANAKFN (1815 aa)) are stem. Serine 70 carries the phosphoserine modification. Coiled coils occupy residues 181–202 (SVEK…NIEI), 455–478 (AHRK…QLRA), and 543–566 (TEAW…RITA). The interaction with DYNC1I2 stretch occupies residues 448–703 (MVWRINPAHR…NTQEIFDDWA (256 aa)). Residues 651–802 (AKQIDRQLTA…EKVEERNTIS (152 aa)) form an interaction with DYNC1LI2 region. Lysine 1125 carries the N6-acetyllysine modification. 2 coiled-coil regions span residues 1171-1252 (TYVQ…AVES) and 1357-1373 (RKLR…LKSF). Residue serine 1230 is modified to Phosphoserine. AAA regions lie at residues 1868 to 2099 (YGFE…VLVS), 2180 to 2452 (EELK…LTRL), 2556 to 2805 (EVET…WVRG), and 2899 to 3168 (VFYE…GGRT). Residues 1906-1913 (GPAGTGKT) and 2224-2231 (GPSGSGKS) contribute to the ATP site. The segment at 2390–2411 (GEDEAQRRRKGKEDEGEEAASP) is disordered. Residues 2595-2602 (GPPGSGKT) and 2937-2944 (GVSGAGKT) contribute to the ATP site. Coiled-coil stretches lie at residues 3189 to 3275 (EKRS…ADKQ), 3396 to 3500 (AIAQ…KNQM), and 3737 to 3800 (EFQL…VSQQ). Residues 3189-3500 (EKRSELEEQQ…KTSETFKNQM (312 aa)) form a stalk region. Residue lysine 3480 is modified to N6-acetyllysine. AAA stretches follow at residues 3553–3782 (LSNA…EVTR) and 4005–4221 (AHMF…TVDT). Residue serine 4162 is modified to Phosphoserine. Lysine 4283 carries the post-translational modification N6-acetyllysine. Threonine 4366 is modified (phosphothreonine). Serine 4368 is subject to Phosphoserine.

This sequence belongs to the dynein heavy chain family. Homodimer. The cytoplasmic dynein 1 complex consists of two catalytic heavy chains (HCs) and a number of non-catalytic subunits presented by intermediate chains (ICs), light intermediate chains (LICs) and light chains (LCs); the composition seems to vary in respect to the IC, LIC and LC composition. The heavy chain homodimer serves as a scaffold for the probable homodimeric assembly of the respective non-catalytic subunits. The ICs and LICs bind directly to the HC dimer and dynein LCs assemble on the IC dimer. Interacts with DYNC1LI1; DYNC1LI1 and DYNC1LI2 bind mutually exclusive to DYNC1H1. Interacts with DYNC1LI2; DYNC1LI1 and DYNC1LI2 bind mutually exclusive to DYNC1H1. Interacts with DYNC1I2. Interacts with BICD2. Interacts with isoform 2 of CRACR2A. Interacts with DNALI1.

It is found in the cytoplasm. The protein resides in the cytoskeleton. Functionally, cytoplasmic dynein 1 acts as a motor for the intracellular retrograde motility of vesicles and organelles along microtubules. Dynein has ATPase activity; the force-producing power stroke is thought to occur on release of ADP. Plays a role in mitotic spindle assembly and metaphase plate congression. In Homo sapiens (Human), this protein is Cytoplasmic dynein 1 heavy chain 1.